Here is a 493-residue protein sequence, read N- to C-terminus: Alpha-amylase-related protein (493 aa).

Residues 1-19 (MFKLALTLTLCLAGSLSLA) form the signal peptide. Gln20 carries the pyrrolidone carboxylic acid modification. Cys47 and Cys103 are joined by a disulfide. Ca(2+) contacts are provided by Asn117, Gln168, and Asp177. Cys156 and Cys170 are joined by a disulfide. Arg205 is a chloride binding site. The Nucleophile role is filled by Asp207. Residue His211 participates in Ca(2+) binding. The Proton donor role is filled by Glu244. Positions 307 and 342 each coordinate chloride. 3 disulfides stabilise this stretch: Cys375/Cys381, Cys417/Cys440, and Cys447/Cys459.

This sequence belongs to the glycosyl hydrolase 13 family. Monomer. Ca(2+) serves as cofactor. Requires chloride as cofactor.

Its subcellular location is the secreted. The enzyme catalyses Endohydrolysis of (1-&gt;4)-alpha-D-glucosidic linkages in polysaccharides containing three or more (1-&gt;4)-alpha-linked D-glucose units.. This is Alpha-amylase-related protein (Amyrel) from Drosophila teissieri (Fruit fly).